Reading from the N-terminus, the 213-residue chain is Ribonuclease HII (213 aa).

The region spanning 2–213 (GRVAGIDEAG…KEWATWKRLR (212 aa)) is the RNase H type-2 domain. The a divalent metal cation site is built by Asp-8, Glu-9, and Asp-113.

Belongs to the RNase HII family. Mn(2+) serves as cofactor. The cofactor is Mg(2+).

The protein resides in the cytoplasm. It carries out the reaction Endonucleolytic cleavage to 5'-phosphomonoester.. In terms of biological role, endonuclease that specifically degrades the RNA of RNA-DNA hybrids. The protein is Ribonuclease HII of Thermofilum pendens (strain DSM 2475 / Hrk 5).